The sequence spans 130 residues: MRHRKSGRQLNRNSSHRQAMFRNMASSLVRHEIIKTTLPKAKELRRVVEPLITLAKTDSVANRRLAFARTRDNEIVAKLFNELGPRFASRAGGYTRILKCGFRAGDNAPMAYIELVDRSVSQTEEVATAE.

Belongs to the bacterial ribosomal protein bL17 family. In terms of assembly, part of the 50S ribosomal subunit. Contacts protein L32.

This is Large ribosomal subunit protein bL17 from Pectobacterium atrosepticum (strain SCRI 1043 / ATCC BAA-672) (Erwinia carotovora subsp. atroseptica).